The chain runs to 144 residues: Large ribosomal subunit protein uL14 (144 aa).

The protein belongs to the universal ribosomal protein uL14 family. As to quaternary structure, part of the 50S ribosomal subunit. Forms a cluster with proteins L3 and L24e, part of which may contact the 16S rRNA in 2 intersubunit bridges.

Functionally, binds to 23S rRNA. Forms part of two intersubunit bridges in the 70S ribosome. The polypeptide is Large ribosomal subunit protein uL14 (Pyrobaculum arsenaticum (strain DSM 13514 / JCM 11321 / PZ6)).